A 132-amino-acid polypeptide reads, in one-letter code: Large ribosomal subunit protein bL19 (132 aa).

Belongs to the bacterial ribosomal protein bL19 family.

In terms of biological role, this protein is located at the 30S-50S ribosomal subunit interface and may play a role in the structure and function of the aminoacyl-tRNA binding site. The chain is Large ribosomal subunit protein bL19 from Methylobacterium radiotolerans (strain ATCC 27329 / DSM 1819 / JCM 2831 / NBRC 15690 / NCIMB 10815 / 0-1).